Consider the following 685-residue polypeptide: Methionine--tRNA ligase (685 aa).

Residues 15–25 (PYANGPIHLGH) carry the 'HIGH' region motif. The Zn(2+) site is built by C146, C149, C159, and C162. Positions 331 to 335 (KMSKS) match the 'KMSKS' region motif. K334 contacts ATP. The tRNA-binding domain occupies 583–685 (DFAKMDLRVA…AGVKAGSRVK (103 aa)).

It belongs to the class-I aminoacyl-tRNA synthetase family. MetG type 1 subfamily. In terms of assembly, homodimer. Requires Zn(2+) as cofactor.

The protein resides in the cytoplasm. The enzyme catalyses tRNA(Met) + L-methionine + ATP = L-methionyl-tRNA(Met) + AMP + diphosphate. In terms of biological role, is required not only for elongation of protein synthesis but also for the initiation of all mRNA translation through initiator tRNA(fMet) aminoacylation. The protein is Methionine--tRNA ligase of Actinobacillus succinogenes (strain ATCC 55618 / DSM 22257 / CCUG 43843 / 130Z).